We begin with the raw amino-acid sequence, 228 residues long: Cytidylate kinase (228 aa).

Position 12–20 (12–20 (GPASAGKST)) interacts with ATP.

It belongs to the cytidylate kinase family. Type 1 subfamily.

The protein localises to the cytoplasm. It catalyses the reaction CMP + ATP = CDP + ADP. It carries out the reaction dCMP + ATP = dCDP + ADP. The sequence is that of Cytidylate kinase from Lactiplantibacillus plantarum (strain ATCC BAA-793 / NCIMB 8826 / WCFS1) (Lactobacillus plantarum).